Reading from the N-terminus, the 321-residue chain is Cytochrome c biogenesis protein CcsA (321 aa).

Transmembrane regions (helical) follow at residues 17 to 37, 41 to 61, 68 to 88, 143 to 163, 227 to 247, 260 to 277, and 288 to 308; these read IISI…IIGL, LEKG…IRWV, LSNL…IHIF, MLLS…LLVI, IINL…VWAN, ETWA…LHTR, and AIVA…VNLL.

Belongs to the CcmF/CycK/Ccl1/NrfE/CcsA family. May interact with Ccs1.

It is found in the plastid. Its subcellular location is the chloroplast thylakoid membrane. Its function is as follows. Required during biogenesis of c-type cytochromes (cytochrome c6 and cytochrome f) at the step of heme attachment. This chain is Cytochrome c biogenesis protein CcsA, found in Piper cenocladum (Ant piper).